We begin with the raw amino-acid sequence, 144 residues long: Large ribosomal subunit protein uL15 (144 aa).

The disordered stretch occupies residues 1–51 (MRLNTLSPAEGAKHSAKRLGRGIGSGLGKTGGRGHKGQKSRTGGKVRRGFE). The segment covering 21–31 (RGIGSGLGKTG) has biased composition (gly residues). The segment covering 32 to 47 (GRGHKGQKSRTGGKVR) has biased composition (basic residues).

This sequence belongs to the universal ribosomal protein uL15 family. As to quaternary structure, part of the 50S ribosomal subunit.

Binds to the 23S rRNA. The sequence is that of Large ribosomal subunit protein uL15 from Actinobacillus succinogenes (strain ATCC 55618 / DSM 22257 / CCUG 43843 / 130Z).